The following is a 166-amino-acid chain: Peptidoglycan-associated lipoprotein (166 aa).

The N-terminal stretch at 1-21 (MEMLKFGKFAALALAMAVAVG) is a signal peptide. Residue Cys22 is the site of N-palmitoyl cysteine attachment. Residue Cys22 is the site of S-diacylglycerol cysteine attachment. Positions 54–166 (SEEAALRAIT…AQNRRVELRK (113 aa)) constitute an OmpA-like domain. The segment at 147–166 (VATGNDEQSWAQNRRVELRK) is disordered.

Belongs to the Pal lipoprotein family. In terms of assembly, the Tol-Pal system is composed of five core proteins: the inner membrane proteins TolA, TolQ and TolR, the periplasmic protein TolB and the outer membrane protein Pal. They form a network linking the inner and outer membranes and the peptidoglycan layer.

The protein localises to the cell outer membrane. In terms of biological role, part of the Tol-Pal system, which plays a role in outer membrane invagination during cell division and is important for maintaining outer membrane integrity. The chain is Peptidoglycan-associated lipoprotein from Pseudomonas putida (Arthrobacter siderocapsulatus).